A 490-amino-acid chain; its full sequence is Cyclin-T1-3 (490 aa).

Disordered regions lie at residues 275–391 and 414–490; these read RVAP…GDVA and AAED…RLRS. 2 stretches are compositionally biased toward polar residues: residues 282-298 and 352-365; these read QGND…NQRA and TANS…SSTM. Composition is skewed to basic and acidic residues over residues 367-391 and 457-490; these read AMKK…GDVA and QEYR…RLRS.

The protein belongs to the cyclin family. Cyclin T subfamily.

This chain is Cyclin-T1-3 (CYCT1-3), found in Oryza sativa subsp. japonica (Rice).